A 361-amino-acid polypeptide reads, in one-letter code: Phospho-N-acetylmuramoyl-pentapeptide-transferase (361 aa).

Transmembrane regions (helical) follow at residues Leu28–Leu48, Thr73–Leu93, Tyr97–Tyr117, Phe134–Leu154, Val168–Thr188, Gly200–Ala220, Ala237–Phe257, Val264–Ile284, Ile289–Val309, and Gln338–Leu358.

Belongs to the glycosyltransferase 4 family. MraY subfamily. Mg(2+) is required as a cofactor.

The protein resides in the cell inner membrane. The catalysed reaction is UDP-N-acetyl-alpha-D-muramoyl-L-alanyl-gamma-D-glutamyl-meso-2,6-diaminopimeloyl-D-alanyl-D-alanine + di-trans,octa-cis-undecaprenyl phosphate = di-trans,octa-cis-undecaprenyl diphospho-N-acetyl-alpha-D-muramoyl-L-alanyl-D-glutamyl-meso-2,6-diaminopimeloyl-D-alanyl-D-alanine + UMP. Its pathway is cell wall biogenesis; peptidoglycan biosynthesis. In terms of biological role, catalyzes the initial step of the lipid cycle reactions in the biosynthesis of the cell wall peptidoglycan: transfers peptidoglycan precursor phospho-MurNAc-pentapeptide from UDP-MurNAc-pentapeptide onto the lipid carrier undecaprenyl phosphate, yielding undecaprenyl-pyrophosphoryl-MurNAc-pentapeptide, known as lipid I. This chain is Phospho-N-acetylmuramoyl-pentapeptide-transferase, found in Nitrosomonas europaea (strain ATCC 19718 / CIP 103999 / KCTC 2705 / NBRC 14298).